A 161-amino-acid polypeptide reads, in one-letter code: Phosphopantetheine adenylyltransferase (161 aa).

Ser-9 contacts substrate. ATP contacts are provided by residues 9 to 10 (SF) and His-17. Substrate is bound by residues Lys-41, Leu-73, and Arg-87. ATP is bound by residues 88 to 90 (GLR), Glu-98, and 123 to 129 (YTFISSS).

Belongs to the bacterial CoaD family. In terms of assembly, homohexamer. Requires Mg(2+) as cofactor.

It is found in the cytoplasm. It carries out the reaction (R)-4'-phosphopantetheine + ATP + H(+) = 3'-dephospho-CoA + diphosphate. Its pathway is cofactor biosynthesis; coenzyme A biosynthesis; CoA from (R)-pantothenate: step 4/5. In terms of biological role, reversibly transfers an adenylyl group from ATP to 4'-phosphopantetheine, yielding dephospho-CoA (dPCoA) and pyrophosphate. This chain is Phosphopantetheine adenylyltransferase, found in Syntrophomonas wolfei subsp. wolfei (strain DSM 2245B / Goettingen).